The sequence spans 120 residues: Large ribosomal subunit protein uL18 (120 aa).

It belongs to the universal ribosomal protein uL18 family. As to quaternary structure, part of the 50S ribosomal subunit; part of the 5S rRNA/L5/L18/L25 subcomplex. Contacts the 5S and 23S rRNAs.

In terms of biological role, this is one of the proteins that bind and probably mediate the attachment of the 5S RNA into the large ribosomal subunit, where it forms part of the central protuberance. This Rhodopseudomonas palustris (strain HaA2) protein is Large ribosomal subunit protein uL18.